We begin with the raw amino-acid sequence, 215 residues long: Probable phosphoglycerate mutase GpmB (215 aa).

Substrate-binding positions include 8–15 (RHGETLWN), 21–22 (QG), Arg-58, Arg-60, 82–85 (ELNM), and 151–152 (GM). Catalysis depends on His-9, which acts as the Tele-phosphohistidine intermediate. Glu-82 functions as the Proton donor/acceptor in the catalytic mechanism.

This sequence belongs to the phosphoglycerate mutase family. GpmB subfamily.

The enzyme catalyses (2R)-2-phosphoglycerate = (2R)-3-phosphoglycerate. The protein operates within carbohydrate degradation; glycolysis; pyruvate from D-glyceraldehyde 3-phosphate: step 3/5. In Erwinia tasmaniensis (strain DSM 17950 / CFBP 7177 / CIP 109463 / NCPPB 4357 / Et1/99), this protein is Probable phosphoglycerate mutase GpmB.